A 388-amino-acid polypeptide reads, in one-letter code: Na(+)/H(+) antiporter NhaA (388 aa).

Transmembrane regions (helical) follow at residues 8-28 (FFSAASGGAIILLLSALLGLL), 57-77 (LAEFISIAPMSLFFFVVIAEI), 93-113 (ILPLISALGGMMIPACLYGLI), 123-143 (GWAIPIATDAAFTLPIILALG), 152-172 (VWLMALAIFDDLLGIVVIALF), 175-195 (SHLNGYALFAAGLITAVMIGL), 210-230 (GVVLWWALLVSGLHPTIAGVI), 254-274 (IIAPWVTWLILPLFGFVSMGM), 278-298 (AMSFHVLLAPVPLGVALGLFL), 328-348 (LFGLSLLCGIGFTISLFIAEL), and 361-381 (YGILMGSLLSALAGWLWLRFL).

It belongs to the NhaA Na(+)/H(+) (TC 2.A.33) antiporter family.

It is found in the cell inner membrane. The enzyme catalyses Na(+)(in) + 2 H(+)(out) = Na(+)(out) + 2 H(+)(in). Functionally, na(+)/H(+) antiporter that extrudes sodium in exchange for external protons. This chain is Na(+)/H(+) antiporter NhaA, found in Zymomonas mobilis subsp. mobilis (strain ATCC 31821 / ZM4 / CP4).